The sequence spans 445 residues: Rab GDP dissociation inhibitor beta (445 aa).

Residue methionine 1 is modified to N-acetylmethionine. Residue lysine 57 is modified to N6-succinyllysine. An N6-acetyllysine modification is found at lysine 112. Serine 130 carries the phosphoserine modification. An N6-acetyllysine modification is found at lysine 269. Position 382 is a phosphoserine (serine 382).

It belongs to the Rab GDI family. In terms of assembly, interacts with RHOH. Interacts with the GDP-bound inactive forms of RAB3A, RAB3B, RAB3C, RAB5A, RAB5B, RAB5C, RAB8A, RAB8B, RAB10, RAB12, RAB35, and RAB43; binds RAB3D to a lesser extent. Interacts with DZIP1; this interaction negatively regulates the interaction of GDI2 with GDP-bound RAB8A. In terms of tissue distribution, ubiquitously expressed.

It localises to the cytoplasm. It is found in the membrane. The protein localises to the golgi apparatus. Its subcellular location is the trans-Golgi network. In terms of biological role, GDP-dissociation inhibitor preventing the GDP to GTP exchange of most Rab proteins. By keeping these small GTPases in their inactive GDP-bound form regulates intracellular membrane trafficking. Negatively regulates protein transport to the cilium and ciliogenesis through the inhibition of RAB8A. The polypeptide is Rab GDP dissociation inhibitor beta (Gdi2) (Rattus norvegicus (Rat)).